The chain runs to 248 residues: Tabserin (248 aa).

Residues 1-19 (MLKYSALFLYLIYVGGSES) form the signal peptide. The 225-residue stretch at 24 to 248 (IVGGVPVAEE…PYFENGLRKR (225 aa)) folds into the Peptidase S1 domain. Cys49 and Cys65 are oxidised to a cystine. Residues His64 and Asp111 each act as charge relay system in the active site. 2 disulfide bridges follow: Cys175-Cys189 and Cys201-Cys226. Ser205 (charge relay system) is an active-site residue.

This sequence belongs to the peptidase S1 family. Expressed in salivary glands.

It localises to the secreted. Functionally, serine protease that inhibits blood coagulation in a dose-dependent manner. May act by destroying coagulant factors to inhibit blood coagulation. The polypeptide is Tabserin (Tabanus yao (Horsefly)).